The primary structure comprises 373 residues: Saccharopine dehydrogenase [NAD(+), L-lysine-forming] (373 aa).

A2 bears the N-acetylalanine; partial mark. The L-saccharopine site is built by R18 and K77. K77 functions as the Proton acceptor in the catalytic mechanism. The active-site Proton donor is the H96. Q101 is an L-saccharopine binding site. Position 130 (R130) interacts with NAD(+). L-saccharopine contacts are provided by R131 and F135. Residues 203–204, D227, T231, Y251, and V278 contribute to the NAD(+) site; that span reads GR. A disulfide bridge connects residues C205 and C249. 279 to 281 serves as a coordination point for L-saccharopine; it reads SAD. NAD(+) is bound at residue 318–321; it reads IDHL. Residues 371–373 carry the Microbody targeting signal motif; sequence SRL.

This sequence belongs to the AlaDH/PNT family. Monomer.

The protein resides in the peroxisome. The enzyme catalyses L-saccharopine + NAD(+) + H2O = L-lysine + 2-oxoglutarate + NADH + H(+). Its pathway is amino-acid biosynthesis; L-lysine biosynthesis via AAA pathway; L-lysine from L-alpha-aminoadipate (fungal route): step 3/3. Inhibited by p-chloromercuribenzoate and iodoacetate by modification of the active site cysteine residue. Inhibited by diethyl pyrocarbonate by modification of histidine residues. Inhibited by pyridoxal 5'-phosphate by modification of an essential lysine residue. Catalyzes the NAD(+)-dependent cleavage of saccharopine to L-lysine and 2-oxoglutarate, the final step in the alpha-aminoadipate (AAA) pathway for lysine biosynthesis. This is Saccharopine dehydrogenase [NAD(+), L-lysine-forming] from Saccharomyces cerevisiae (strain ATCC 204508 / S288c) (Baker's yeast).